Reading from the N-terminus, the 303-residue chain is Probable cell division protein WhiA (303 aa).

The H-T-H motif DNA-binding region spans 272–303; the sequence is SIQQVADALEFPITKSGVNHRLRKINKIADDL.

The protein belongs to the WhiA family.

Functionally, involved in cell division and chromosome segregation. The polypeptide is Probable cell division protein WhiA (Streptococcus pyogenes serotype M6 (strain ATCC BAA-946 / MGAS10394)).